We begin with the raw amino-acid sequence, 103 residues long: Small ribosomal subunit protein uS10 (103 aa).

It belongs to the universal ribosomal protein uS10 family. As to quaternary structure, part of the 30S ribosomal subunit.

Its function is as follows. Involved in the binding of tRNA to the ribosomes. This is Small ribosomal subunit protein uS10 from Buchnera aphidicola subsp. Acyrthosiphon pisum (strain 5A).